The primary structure comprises 366 residues: Inactive protein RESTRICTED TEV MOVEMENT 2 (366 aa).

One can recognise a sHSP domain in the interval 14–121 (VQYEDFVPKS…LPETSRTEAA (108 aa)). The A-1 repeat unit spans residues 129–133 (LEEKR). The 6 X 5 AA repeats A of L-E-E-[SKR]-[ERK] stretch occupies residues 129 to 220 (LEEKRLLEES…LEERRLEERK (92 aa)). An A-2 repeat occupies 135 to 139 (LEESR). The stretch at 156 to 160 (LEEKE) is one A-3 repeat. The B-1 repeat unit spans residues 163–176 (IRKLQEEAKAKEEA). Residues 163 to 206 (IRKLQEEAKAKEEAEMRKLQEEAKANEEAAAKKLQEEIEAKEKL) form a 3 X 14 AA repeats B of [IMA]-[RK]-K-L-Q-E-E-A-K-A-K-E-[EK]-[LA] region. The stretch at 178–191 (MRKLQEEAKANEEA) is one B-2 repeat. The stretch at 193 to 205 (AKKLQEEIEAKEK) is one B-3 repeat. Residues 206–210 (LEERK) form an A-4 repeat. An A-5 repeat occupies 211 to 215 (LEERR). Residues 216-220 (LEERK) form an A-6 repeat. Residues 322 to 342 (LMMNVGVAALVIFALGAYVSY) form a helical membrane-spanning segment. A disordered region spans residues 345-366 (CSSSSSSSSSSPSSSSSSTKPE). Residues 346–366 (SSSSSSSSSSPSSSSSSTKPE) are compositionally biased toward low complexity.

The protein belongs to the small heat shock protein (HSP20) family.

It is found in the cell membrane. Seems to not be involved in heat resistance. Unable to mediate restriction of long-distance movement of the pathogenic tobacco etch virus (TEV) without causing a hypersensitive response or inducing systemic acquired resistance. The chain is Inactive protein RESTRICTED TEV MOVEMENT 2 (RTM2) from Arabidopsis thaliana (Mouse-ear cress).